The following is a 227-amino-acid chain: Large ribosomal subunit protein uL1 (227 aa).

It belongs to the universal ribosomal protein uL1 family. Part of the 50S ribosomal subunit.

Functionally, binds directly to 23S rRNA. The L1 stalk is quite mobile in the ribosome, and is involved in E site tRNA release. Its function is as follows. Protein L1 is also a translational repressor protein, it controls the translation of the L11 operon by binding to its mRNA. In Tropheryma whipplei (strain TW08/27) (Whipple's bacillus), this protein is Large ribosomal subunit protein uL1.